We begin with the raw amino-acid sequence, 368 residues long: Queuine tRNA-ribosyltransferase (368 aa).

Asp89 acts as the Proton acceptor in catalysis. Residues 89-93 (DSGGF), Asp143, and Gly216 each bind substrate. An RNA binding region spans residues 247 to 253 (GVGKPED). The active-site Nucleophile is Asp266. Positions 271–275 (TRNAR) are RNA binding; important for wobble base 34 recognition. 4 residues coordinate Zn(2+): Cys304, Cys306, Cys309, and His335.

This sequence belongs to the queuine tRNA-ribosyltransferase family. Homodimer. Within each dimer, one monomer is responsible for RNA recognition and catalysis, while the other monomer binds to the replacement base PreQ1. It depends on Zn(2+) as a cofactor.

The enzyme catalyses 7-aminomethyl-7-carbaguanine + guanosine(34) in tRNA = 7-aminomethyl-7-carbaguanosine(34) in tRNA + guanine. It participates in tRNA modification; tRNA-queuosine biosynthesis. Functionally, catalyzes the base-exchange of a guanine (G) residue with the queuine precursor 7-aminomethyl-7-deazaguanine (PreQ1) at position 34 (anticodon wobble position) in tRNAs with GU(N) anticodons (tRNA-Asp, -Asn, -His and -Tyr). Catalysis occurs through a double-displacement mechanism. The nucleophile active site attacks the C1' of nucleotide 34 to detach the guanine base from the RNA, forming a covalent enzyme-RNA intermediate. The proton acceptor active site deprotonates the incoming PreQ1, allowing a nucleophilic attack on the C1' of the ribose to form the product. After dissociation, two additional enzymatic reactions on the tRNA convert PreQ1 to queuine (Q), resulting in the hypermodified nucleoside queuosine (7-(((4,5-cis-dihydroxy-2-cyclopenten-1-yl)amino)methyl)-7-deazaguanosine). The chain is Queuine tRNA-ribosyltransferase from Buchnera aphidicola subsp. Schizaphis graminum (strain Sg).